We begin with the raw amino-acid sequence, 374 residues long: tRNA-specific 2-thiouridylase MnmA (374 aa).

ATP-binding positions include 12 to 19 (GMSGGVDS) and Met38. Residues 98-100 (NPD) are interaction with target base in tRNA. Residue Cys103 is the Nucleophile of the active site. Cys103 and Cys202 are joined by a disulfide. Gly128 provides a ligand contact to ATP. The interval 152–154 (KDQ) is interaction with tRNA. Cys202 acts as the Cysteine persulfide intermediate in catalysis. Residues 316 to 317 (RY) form an interaction with tRNA region.

Belongs to the MnmA/TRMU family.

Its subcellular location is the cytoplasm. The enzyme catalyses S-sulfanyl-L-cysteinyl-[protein] + uridine(34) in tRNA + AH2 + ATP = 2-thiouridine(34) in tRNA + L-cysteinyl-[protein] + A + AMP + diphosphate + H(+). Its function is as follows. Catalyzes the 2-thiolation of uridine at the wobble position (U34) of tRNA, leading to the formation of s(2)U34. This is tRNA-specific 2-thiouridylase MnmA from Vibrio campbellii (strain ATCC BAA-1116).